The sequence spans 168 residues: Cell division inhibitor SulA (168 aa).

The segment at 105-111 (ALETGNY) is ftsZ binding. The tract at residues 161–168 (RIHSGMVH) is lon protease binding.

Belongs to the SulA family. In terms of assembly, interacts with FtsZ. In terms of processing, is rapidly cleaved and degraded by the Lon protease once DNA damage is repaired.

Component of the SOS system and an inhibitor of cell division. Accumulation of SulA causes rapid cessation of cell division and the appearance of long, non-septate filaments. In the presence of GTP, binds a polymerization-competent form of FtsZ in a 1:1 ratio, thus inhibiting FtsZ polymerization and therefore preventing it from participating in the assembly of the Z ring. This mechanism prevents the premature segregation of damaged DNA to daughter cells during cell division. The polypeptide is Cell division inhibitor SulA (Cronobacter sakazakii (strain ATCC BAA-894) (Enterobacter sakazakii)).